Consider the following 211-residue polypeptide: Envelope protein UL45 homolog (211 aa).

The Intravirion portion of the chain corresponds to 1-46 (MMSPTPEDDRDLVVVRGRLRMMDNGAEHDRERRSYTAWPHLCCGCT). Residues 47–67 (IGIILTMFVIATTLLLASLFA) form a helical; Signal-anchor for type II membrane protein membrane-spanning segment. Topologically, residues 68–211 (FSYMSLESGT…SSILSNAIMK (144 aa)) are virion surface. Residues N96 and N133 are each glycosylated (N-linked (GlcNAc...) asparagine; by host).

This sequence belongs to the herpesviridae HHV-1 UL45 family.

The protein resides in the virion membrane. This Gallid herpesvirus 2 (strain Chicken/Md5/ATCC VR-987) (GaHV-2) protein is Envelope protein UL45 homolog (UL45H).